Here is a 471-residue protein sequence, read N- to C-terminus: Tryptophanase (471 aa).

Residues lysine 5, lysine 115, and lysine 156 each carry the N6-acetyllysine modification. The residue at position 270 (lysine 270) is an N6-(pyridoxal phosphate)lysine. N6-acetyllysine is present on lysine 450.

The protein belongs to the beta-eliminating lyase family. In terms of assembly, homotetramer. Requires pyridoxal 5'-phosphate as cofactor.

The catalysed reaction is L-tryptophan + H2O = indole + pyruvate + NH4(+). Its pathway is amino-acid degradation; L-tryptophan degradation via pyruvate pathway; indole and pyruvate from L-tryptophan: step 1/1. In Escherichia fergusonii (strain ATCC 35469 / DSM 13698 / CCUG 18766 / IAM 14443 / JCM 21226 / LMG 7866 / NBRC 102419 / NCTC 12128 / CDC 0568-73), this protein is Tryptophanase.